Here is a 214-residue protein sequence, read N- to C-terminus: uncharacterized protein (214 aa).

Residues 1 to 17 form the signal peptide; that stretch reads MLKKIIILFLGVFVLSG. Cys-18 carries the N-palmitoyl cysteine lipid modification. Residue Cys-18 is the site of S-diacylglycerol cysteine attachment. Over residues 64–77 the composition is skewed to acidic residues; that stretch reads DNLDDPEDDDDDYD. 3 disordered regions span residues 64–83, 106–138, and 166–197; these read DNLDDPEDDDDDYDNPLRGE, YKAESGESSDDDDMTLSKANKKVRKDNTDKERK, and TANQNYVPPVSNYEPVAPVKNNKPYNNNSKVK. Residues 120 to 162 adopt a coiled-coil conformation; the sequence is TLSKANKKVRKDNTDKERKMQEELDQIKAMLRETKRDISKYTC.

It is found in the cell membrane. This is an uncharacterized protein from Rickettsia bellii (strain RML369-C).